Reading from the N-terminus, the 77-residue chain is Apelin (77 aa).

An N-terminal signal peptide occupies residues 1-22 (MNLRLCVQALLLLWLSLTAVCG). The propeptide occupies 23–41 (GSLMPLPDGNGLEDGNVRH). Residues 43-77 (VQPRGSRNGPGPWQGGRRKFRRQRPRLSHKGPMPF) form a disordered region. A compositionally biased stretch (basic residues) spans 58-71 (GRRKFRRQRPRLSH).

The protein belongs to the apelin family. In terms of processing, several active peptides may be produced by proteolytic processing of the peptide precursor. Expressed in the brain with highest levels in the frontal cortex, thalamus, hypothalamus and midbrain. Secreted by the mammary gland into the colostrum and the milk.

The protein localises to the secreted. Its subcellular location is the extracellular space. Peptide hormone that functions as endogenous ligand for the G-protein-coupled apelin receptor (APLNR/APJ), that plays a role in cadiovascular homeostasis. Functions as a balanced agonist activating both G(i) protein pathway and beta-arrestin pathway of APLNR. Downstream G proteins activation, apelin can inhibit cAMP production and activate key intracellular effectors such as ERKs. On the other hand, APLNR activation induces beta-arrestin recruitment to the membrane leading to desensitization and internalization of the receptor. Apelin blunts cardiac hypertrophic induction from APLNR on response to pathological stimuli, but also induces myocardial hypertrophy under normal conditions. Apelin-36 dissociates more hardly than (pyroglu)apelin-13 from APLNR. Involved in the regulation of cardiac precursor cell movements during gastrulation and heart morphogenesis. Has an inhibitory effect on cytokine production in response to T-cell receptor/CD3 cross-linking; the oral intake of apelin in the colostrum and the milk might therefore modulate immune responses in neonates. Plays a role in early coronary blood vessels formation. Mediates myocardial contractility in an ERK1/2-dependent manner. May also have a role in the central control of body fluid homeostasis by influencing vasopressin release and drinking behavior. Functionally, (Microbial infection) Endogenous ligand for the apelin receptor (APLNR), an alternative coreceptor with CD4 for HIV-1 infection. Inhibits HIV-1 entry in cells coexpressing CD4 and APLNR. Apelin-36 has a greater inhibitory activity on HIV infection than other synthetic apelin derivatives. The sequence is that of Apelin from Homo sapiens (Human).